Here is a 240-residue protein sequence, read N- to C-terminus: Large ribosomal subunit protein bL25 (240 aa).

2 disordered regions span residues 1–21 (MAEN…PARR) and 204–240 (GAAP…KAKK). Residues 204–229 (GAAPAAGAAAPAGGAAPAAGAAPAKG) are compositionally biased toward low complexity. Residues 230-240 (GEAKGGDKAKK) are compositionally biased toward basic and acidic residues.

Belongs to the bacterial ribosomal protein bL25 family. CTC subfamily. As to quaternary structure, part of the 50S ribosomal subunit; part of the 5S rRNA/L5/L18/L25 subcomplex. Contacts the 5S rRNA. Binds to the 5S rRNA independently of L5 and L18.

This is one of the proteins that binds to the 5S RNA in the ribosome where it forms part of the central protuberance. This is Large ribosomal subunit protein bL25 from Anaeromyxobacter dehalogenans (strain 2CP-1 / ATCC BAA-258).